Reading from the N-terminus, the 104-residue chain is Co-chaperonin GroES 3 (104 aa).

It belongs to the GroES chaperonin family. In terms of assembly, heptamer of 7 subunits arranged in a ring. Interacts with the chaperonin GroEL.

The protein localises to the cytoplasm. Functionally, together with the chaperonin GroEL, plays an essential role in assisting protein folding. The GroEL-GroES system forms a nano-cage that allows encapsulation of the non-native substrate proteins and provides a physical environment optimized to promote and accelerate protein folding. GroES binds to the apical surface of the GroEL ring, thereby capping the opening of the GroEL channel. This is Co-chaperonin GroES 3 from Bradyrhizobium diazoefficiens (strain JCM 10833 / BCRC 13528 / IAM 13628 / NBRC 14792 / USDA 110).